A 455-amino-acid polypeptide reads, in one-letter code: MSFIPHKLEQIKKMLDTIGASSVDQLFDEIPRHLRADTLKIKDGINEIQLANLMRKRANKNHHNTNFIGAGAYSHHIPAAIWDIVARGEFYTAYTPYQAEASQGGLQVIYEFQTMMAGLTGMDASNASMYDGATALAESVLMAIRSNKKAKSQKVLIAEALHPTYLRVLETITKHQGIEFDIINLDSKNGKTDVTKLEDFANTDYAAVVIQSPNFLGQLADVDGITNWAHKHGALVIAVTNPMSLAILKSPAEWGDNGADIVCGEGQPMGVPLASGGPYFGFMTCKMAHVRQMPGRIVGRTVDLDGNEGFCLTLQAREQHIRRAKATSNICTNQGLMVTAATIYMSLLGAEGLERVASISHENTQTLATELAKINGVSIRFNSAFFNEVVIDLPINAETFVTEMEKEGIDAGYFLGEYHSDLANSIMVCATEIHTSEDIKEYIEATKKVLARIGG.

This sequence belongs to the GcvP family. N-terminal subunit subfamily. The glycine cleavage system is composed of four proteins: P, T, L and H. In this organism, the P 'protein' is a heterodimer of two subunits.

The enzyme catalyses N(6)-[(R)-lipoyl]-L-lysyl-[glycine-cleavage complex H protein] + glycine + H(+) = N(6)-[(R)-S(8)-aminomethyldihydrolipoyl]-L-lysyl-[glycine-cleavage complex H protein] + CO2. Its function is as follows. The glycine cleavage system catalyzes the degradation of glycine. The P protein binds the alpha-amino group of glycine through its pyridoxal phosphate cofactor; CO(2) is released and the remaining methylamine moiety is then transferred to the lipoamide cofactor of the H protein. The protein is Probable glycine dehydrogenase (decarboxylating) subunit 1 of Francisella tularensis subsp. novicida (strain U112).